The following is a 92-amino-acid chain: Small ribosomal subunit protein uS19c (92 aa).

The protein belongs to the universal ribosomal protein uS19 family.

It localises to the plastid. It is found in the chloroplast. Functionally, protein S19 forms a complex with S13 that binds strongly to the 16S ribosomal RNA. The polypeptide is Small ribosomal subunit protein uS19c (Phaseolus angularis (Azuki bean)).